We begin with the raw amino-acid sequence, 326 residues long: tRNA uridine(34) hydroxylase (326 aa).

Positions 122–218 (EENRCLVLDV…YGQAVGTGKW (97 aa)) constitute a Rhodanese domain. C178 functions as the Cysteine persulfide intermediate in the catalytic mechanism.

The protein belongs to the TrhO family.

The enzyme catalyses uridine(34) in tRNA + AH2 + O2 = 5-hydroxyuridine(34) in tRNA + A + H2O. In terms of biological role, catalyzes oxygen-dependent 5-hydroxyuridine (ho5U) modification at position 34 in tRNAs. This chain is tRNA uridine(34) hydroxylase, found in Chlamydia abortus (strain DSM 27085 / S26/3) (Chlamydophila abortus).